A 196-amino-acid chain; its full sequence is Imidazole glycerol phosphate synthase subunit HisH (196 aa).

Residues 2 to 196 (NVVIVDTECA…LKRFLELTLC (195 aa)) form the Glutamine amidotransferase type-1 domain. C77 acts as the Nucleophile in catalysis. Residues H175 and E177 contribute to the active site.

As to quaternary structure, heterodimer of HisH and HisF.

It localises to the cytoplasm. The catalysed reaction is 5-[(5-phospho-1-deoxy-D-ribulos-1-ylimino)methylamino]-1-(5-phospho-beta-D-ribosyl)imidazole-4-carboxamide + L-glutamine = D-erythro-1-(imidazol-4-yl)glycerol 3-phosphate + 5-amino-1-(5-phospho-beta-D-ribosyl)imidazole-4-carboxamide + L-glutamate + H(+). It catalyses the reaction L-glutamine + H2O = L-glutamate + NH4(+). The protein operates within amino-acid biosynthesis; L-histidine biosynthesis; L-histidine from 5-phospho-alpha-D-ribose 1-diphosphate: step 5/9. Its function is as follows. IGPS catalyzes the conversion of PRFAR and glutamine to IGP, AICAR and glutamate. The HisH subunit catalyzes the hydrolysis of glutamine to glutamate and ammonia as part of the synthesis of IGP and AICAR. The resulting ammonia molecule is channeled to the active site of HisF. This chain is Imidazole glycerol phosphate synthase subunit HisH, found in Idiomarina loihiensis (strain ATCC BAA-735 / DSM 15497 / L2-TR).